We begin with the raw amino-acid sequence, 328 residues long: L-lactate dehydrogenase (328 aa).

NAD(+)-binding positions include Val18, Glu39, Lys46, Tyr71, and 85–86 (GA). Substrate-binding residues include Gln88 and Arg94. Residues Ser107, 124–126 (AAN), and Ser149 contribute to the NAD(+) site. 126 to 129 (NPVD) is a substrate binding site. 154–157 (DSAR) lines the substrate pocket. Residues Arg159 and His174 each coordinate beta-D-fructose 1,6-bisphosphate. The Proton acceptor role is filled by His181. Tyr226 carries the post-translational modification Phosphotyrosine. Thr235 serves as a coordination point for substrate.

The protein belongs to the LDH/MDH superfamily. LDH family. As to quaternary structure, homotetramer.

Its subcellular location is the cytoplasm. It carries out the reaction (S)-lactate + NAD(+) = pyruvate + NADH + H(+). It functions in the pathway fermentation; pyruvate fermentation to lactate; (S)-lactate from pyruvate: step 1/1. Allosterically activated by fructose 1,6-bisphosphate (FBP). Its function is as follows. Catalyzes the conversion of lactate to pyruvate. This chain is L-lactate dehydrogenase, found in Streptococcus thermophilus (strain CNRZ 1066).